Here is a 139-residue protein sequence, read N- to C-terminus: Endoribonuclease YbeY (139 aa).

Zn(2+)-binding residues include His107, His111, and Asp117.

The protein belongs to the endoribonuclease YbeY family. Requires Zn(2+) as cofactor.

It localises to the cytoplasm. In terms of biological role, single strand-specific metallo-endoribonuclease involved in late-stage 70S ribosome quality control and in maturation of the 3' terminus of the 16S rRNA. The chain is Endoribonuclease YbeY from Azobacteroides pseudotrichonymphae genomovar. CFP2.